Here is a 382-residue protein sequence, read N- to C-terminus: Alanine racemase (382 aa).

K39 functions as the Proton acceptor; specific for D-alanine in the catalytic mechanism. At K39 the chain carries N6-(pyridoxal phosphate)lysine. R138 is a substrate binding site. The active-site Proton acceptor; specific for L-alanine is the Y265. M312 is a binding site for substrate.

It belongs to the alanine racemase family. Requires pyridoxal 5'-phosphate as cofactor.

The enzyme catalyses L-alanine = D-alanine. The protein operates within amino-acid biosynthesis; D-alanine biosynthesis; D-alanine from L-alanine: step 1/1. Functionally, catalyzes the interconversion of L-alanine and D-alanine. May also act on other amino acids. The protein is Alanine racemase (alr) of Staphylococcus epidermidis (strain ATCC 35984 / DSM 28319 / BCRC 17069 / CCUG 31568 / BM 3577 / RP62A).